We begin with the raw amino-acid sequence, 158 residues long: Transcriptional repressor NrdR (158 aa).

The segment at Cys3–Cys34 is a zinc-finger region. One can recognise an ATP-cone domain in the interval Ile49–Thr139.

Belongs to the NrdR family. The cofactor is Zn(2+).

Functionally, negatively regulates transcription of bacterial ribonucleotide reductase nrd genes and operons by binding to NrdR-boxes. The protein is Transcriptional repressor NrdR of Thermoanaerobacter pseudethanolicus (strain ATCC 33223 / 39E) (Clostridium thermohydrosulfuricum).